A 343-amino-acid chain; its full sequence is Ornithine carbamoyltransferase (343 aa).

Carbamoyl phosphate-binding positions include 62 to 65 (STRT), Gln89, Arg113, and 140 to 143 (HPTQ). L-ornithine contacts are provided by residues Asn172, Asp236, and 240 to 241 (SM). Carbamoyl phosphate is bound by residues 278–279 (CL) and Arg323.

It belongs to the aspartate/ornithine carbamoyltransferase superfamily. OTCase family.

The protein localises to the cytoplasm. It catalyses the reaction carbamoyl phosphate + L-ornithine = L-citrulline + phosphate + H(+). The protein operates within amino-acid degradation; L-arginine degradation via ADI pathway; carbamoyl phosphate from L-arginine: step 2/2. Functionally, reversibly catalyzes the transfer of the carbamoyl group from carbamoyl phosphate (CP) to the N(epsilon) atom of ornithine (ORN) to produce L-citrulline. This chain is Ornithine carbamoyltransferase, found in Levilactobacillus brevis (strain ATCC 367 / BCRC 12310 / CIP 105137 / JCM 1170 / LMG 11437 / NCIMB 947 / NCTC 947) (Lactobacillus brevis).